The sequence spans 571 residues: Potassium-transporting ATPase potassium-binding subunit (571 aa).

12 helical membrane passes run 5 to 25 (LAAG…YVPV), 60 to 80 (YGYA…LYAL), 86 to 106 (VLPL…NTAV), 131 to 151 (GLAV…VALI), 177 to 197 (ILLP…VIQS), 247 to 267 (PTPV…VSLT), 291 to 311 (LTLL…TLAA), 334 to 354 (FGIP…TGAV), 386 to 406 (GLYG…LLVG), 425 to 445 (ALSV…TVIL), 498 to 518 (ALGL…LALA), and 547 to 567 (GTVV…GPIA).

Belongs to the KdpA family. In terms of assembly, the system is composed of three essential subunits: KdpA, KdpB and KdpC.

It localises to the cell membrane. Its function is as follows. Part of the high-affinity ATP-driven potassium transport (or Kdp) system, which catalyzes the hydrolysis of ATP coupled with the electrogenic transport of potassium into the cytoplasm. This subunit binds the extracellular potassium ions and delivers the ions to the membrane domain of KdpB through an intramembrane tunnel. The protein is Potassium-transporting ATPase potassium-binding subunit of Rhodococcus jostii (strain RHA1).